The primary structure comprises 436 residues: Methyl-accepting chemotaxis protein Amb0994 (436 aa).

Residues 1-8 are Cytoplasmic-facing; sequence METTLGSY. A helical transmembrane segment spans residues 9 to 29; sequence ARTLSLGMLVPSAICLLAGTF. Gly-30 is a topological domain (periplasmic). A helical membrane pass occupies residues 31–51; that stretch reads LLGGSSIALWVVIAVSLLGVV. Residues 52-436 are Cytoplasmic-facing; the sequence is GGVKIGGSAR…DGFIARIGGR (385 aa). The Methyl-accepting transducer domain maps to 180–416; the sequence is AATELEASSG…QVADAASELS (237 aa). Residue Gln-211 is modified to Glutamate methyl ester (Gln). Glu-225 bears the Glutamate methyl ester (Glu) mark. The interval 321-436 is required for interaction with MamK and to respond to the magnetic field; it reads TEDITSQVAH…DGFIARIGGR (116 aa).

This sequence belongs to the methyl-accepting chemotaxis (MCP) protein family. In terms of assembly, interacts with MamK at cell poles and septa.

It localises to the cell inner membrane. Probable methyl-accepting taxis protein. May be the receptor that senses the torque generated from the interaction between the magnetosome dipole moment and the external magnetic field. Overproduction interferes with magnetotaxis, cells respond more slowly to changes in the magnetic field; requires the MamK-interacting C-terminus of the protein. The effect of magnetic sensing is to control flagellar rotation. Functionally, chemotactic-signal transducers respond to changes in the concentration of attractants and repellents in the environment, transduce a signal from the outside to the inside of the cell, and facilitate sensory adaptation through variation of methylation levels. Attractants increase the level of methylation while repellents decrease the level of methylation. This chain is Methyl-accepting chemotaxis protein Amb0994, found in Paramagnetospirillum magneticum (strain ATCC 700264 / AMB-1) (Magnetospirillum magneticum).